A 542-amino-acid polypeptide reads, in one-letter code: Mitogen-activated protein kinase 14 (542 aa).

Residues 13 to 304 (YKIEEVIGKG…AEEALADPYF (292 aa)) form the Protein kinase domain. ATP is bound by residues 19–27 (IGKGSYGVV) and Lys42. Catalysis depends on Asp139, which acts as the Proton acceptor. The residue at position 175 (Thr175) is a Phosphothreonine. The TXY motif lies at 175 to 177 (TDY). Tyr177 carries the post-translational modification Phosphotyrosine. 2 disordered regions span residues 388-412 (STAA…DNRP) and 482-542 (RNPA…SGHW). Residues 488 to 507 (PNSSVPLGSSYPRRNQTCKS) are compositionally biased toward polar residues.

Belongs to the protein kinase superfamily. CMGC Ser/Thr protein kinase family. MAP kinase subfamily. In terms of processing, dually phosphorylated on Thr-175 and Tyr-177, which activates the enzyme.

The catalysed reaction is L-seryl-[protein] + ATP = O-phospho-L-seryl-[protein] + ADP + H(+). The enzyme catalyses L-threonyl-[protein] + ATP = O-phospho-L-threonyl-[protein] + ADP + H(+). With respect to regulation, activated by threonine and tyrosine phosphorylation. This chain is Mitogen-activated protein kinase 14 (MPK14), found in Oryza sativa subsp. japonica (Rice).